A 303-amino-acid polypeptide reads, in one-letter code: Protoporphyrin uptake protein 1 (303 aa).

The Extracellular segment spans residues 1 to 18; sequence MSTTDSGFVLYHYTPSKA. A helical membrane pass occupies residues 19–39; the sequence is AAIVFVVLFIIMTVIFAVQTL. The Cytoplasmic portion of the chain corresponds to 40 to 76; the sequence is YAARKSSKALKNNPFESSDDKVDSLEDAEYKQLKITP. The helical transmembrane segment at 77-97 threads the bilayer; the sequence is TVFAFIPFFTGCIMEAVGYIG. The Extracellular segment spans residues 98–111; that stretch reads RALSSSNPERTTPY. A helical membrane pass occupies residues 112-132; that stretch reads IIQSVLLLVAPALIAATIYMI. The Cytoplasmic portion of the chain corresponds to 133-154; the sequence is FGRLLHVMRCQSLILISARFGT. Residues 155-175 traverse the membrane as a helical segment; sequence TFFVVGDVFSFFLQAAGGGLM. Topologically, residues 176–183 are extracellular; the sequence is SKAGSTKT. The chain crosses the membrane as a helical span at residues 184–204; that stretch reads GSGLITAGLFVQVIFFGFFII. The Cytoplasmic segment spans residues 205–226; that stretch reads NEIRFTVNVKRRCLFYEDISRK. The chain crosses the membrane as a helical span at residues 227–247; it reads WIFVNATLLLSSMLILLRSIV. Over 248-264 the chain is Extracellular; it reads RIVEFIQGFNGYIISHE. The helical transmembrane segment at 265-285 threads the bilayer; that stretch reads YFIYVFDAVPMLLVIIAFSVG. The Cytoplasmic portion of the chain corresponds to 286-303; the sequence is SFFGNVFDVIKECQTLSN.

This sequence belongs to the lipid-translocating exporter (LTE) (TC 9.A.26.1) family. Post-translationally, N-glycosylated.

The protein resides in the cell membrane. Its function is as follows. Involved in inducible protoporphyrin IX influx and heme efflux. This Saccharomyces cerevisiae (strain ATCC 204508 / S288c) (Baker's yeast) protein is Protoporphyrin uptake protein 1 (PUG1).